Consider the following 312-residue polypeptide: Ribosomal protein L11 methyltransferase (312 aa).

Thr-162, Gly-183, Asp-205, and Asn-248 together coordinate S-adenosyl-L-methionine.

This sequence belongs to the methyltransferase superfamily. PrmA family.

The protein resides in the cytoplasm. It carries out the reaction L-lysyl-[protein] + 3 S-adenosyl-L-methionine = N(6),N(6),N(6)-trimethyl-L-lysyl-[protein] + 3 S-adenosyl-L-homocysteine + 3 H(+). Functionally, methylates ribosomal protein L11. The protein is Ribosomal protein L11 methyltransferase of Exiguobacterium sp. (strain ATCC BAA-1283 / AT1b).